The following is a 201-amino-acid chain: 3-isopropylmalate dehydratase small subunit (201 aa).

This sequence belongs to the LeuD family. LeuD type 1 subfamily. Heterodimer of LeuC and LeuD.

It catalyses the reaction (2R,3S)-3-isopropylmalate = (2S)-2-isopropylmalate. The protein operates within amino-acid biosynthesis; L-leucine biosynthesis; L-leucine from 3-methyl-2-oxobutanoate: step 2/4. Its function is as follows. Catalyzes the isomerization between 2-isopropylmalate and 3-isopropylmalate, via the formation of 2-isopropylmaleate. This is 3-isopropylmalate dehydratase small subunit from Methylorubrum populi (strain ATCC BAA-705 / NCIMB 13946 / BJ001) (Methylobacterium populi).